The following is a 320-amino-acid chain: METTKTQFESMAEMIKKLPQHTCSSLKGRITLYKYQDFWGLQNNIEGAILAQQSFKARPDDVFLCSYPKSGTTWLKALAYAIVTREKFDEFTSPLLTNIPHNCIPYIEKDLKKIVENQNNSCFTPMATHMPYHVLPKSILALNCKMVYIYRNIKDVIVSFYHFGREITKLPLEDAPFEEAFDEFYHGISQFGPYWDHLLGYWKASLERPEVILFLKYEDVKKDPTSNVKRLAEFIGYPFTFEEEKEGVIESIIKLCSFENLSNLEVNKSGNSKGFLPIENRLYFRKAKDGDWKNYFTDEMTEKIDKLIDEKLSATGLVLK.

Residue 69–74 (KSGTTW) participates in 3'-phosphoadenylyl sulfate binding. The active-site Proton acceptor is the H129. 3'-phosphoadenylyl sulfate is bound by residues R151, S159, Y217, and 285-287 (RKA).

This sequence belongs to the sulfotransferase 1 family. In terms of tissue distribution, highest in shoot tips and lowest in mature leaves and roots.

It is found in the cytoplasm. It catalyses the reaction quercetin 3-sulfate + 3'-phosphoadenylyl sulfate = quercetin 3,4'-bissulfate + adenosine 3',5'-bisphosphate + H(+). No requirement for divalent cations and insensitive to p-chloromercuribenzoate, iodoacetate, or iodoacetamide. Functionally, sulfotransferase that utilizes 3'-phospho-5'-adenylyl sulfate (PAPS) as sulfonate donor to catalyze the sulfate conjugation of quercetin 3-sulfate &gt; kaempferol 3-sulfate &gt; isorhamnetin 3-sulfate &gt; patuletin 3-sulfate, but not tamarixetin 3-sulfate. O-sulfation of position 4' of flavonol. May play a role in auxin transport. The chain is Flavonol 4'-sulfotransferase from Flaveria chlorifolia (Clasping yellowtops).